The chain runs to 214 residues: tRNA (guanine-N(7)-)-methyltransferase (214 aa).

S-adenosyl-L-methionine-binding residues include E43, E68, D95, and D117. D117 is a catalytic residue. Residues K121, D153, and 190-193 (TEYE) contribute to the substrate site.

The protein belongs to the class I-like SAM-binding methyltransferase superfamily. TrmB family.

It catalyses the reaction guanosine(46) in tRNA + S-adenosyl-L-methionine = N(7)-methylguanosine(46) in tRNA + S-adenosyl-L-homocysteine. Its pathway is tRNA modification; N(7)-methylguanine-tRNA biosynthesis. Functionally, catalyzes the formation of N(7)-methylguanine at position 46 (m7G46) in tRNA. In Staphylococcus aureus (strain USA300), this protein is tRNA (guanine-N(7)-)-methyltransferase.